The sequence spans 598 residues: Arginine--tRNA ligase (598 aa).

The short motif at 131 to 141 (ANPTGPMHVGH) is the 'HIGH' region element. A disordered region spans residues 288–309 (KLPPPKSKKGQPPPQPQPDEEG).

It belongs to the class-I aminoacyl-tRNA synthetase family. In terms of assembly, monomer.

Its subcellular location is the cytoplasm. The catalysed reaction is tRNA(Arg) + L-arginine + ATP = L-arginyl-tRNA(Arg) + AMP + diphosphate. The sequence is that of Arginine--tRNA ligase from Anaeromyxobacter dehalogenans (strain 2CP-1 / ATCC BAA-258).